The following is a 431-amino-acid chain: Enolase (431 aa).

Glutamine 167 is a binding site for (2R)-2-phosphoglycerate. Glutamate 209 functions as the Proton donor in the catalytic mechanism. Residues aspartate 246, glutamate 289, and aspartate 316 each coordinate Mg(2+). (2R)-2-phosphoglycerate contacts are provided by lysine 341, arginine 370, serine 371, and lysine 392. Catalysis depends on lysine 341, which acts as the Proton acceptor.

It belongs to the enolase family. In terms of assembly, component of the RNA degradosome, a multiprotein complex involved in RNA processing and mRNA degradation. Requires Mg(2+) as cofactor.

The protein resides in the cytoplasm. It localises to the secreted. The protein localises to the cell surface. It catalyses the reaction (2R)-2-phosphoglycerate = phosphoenolpyruvate + H2O. Its pathway is carbohydrate degradation; glycolysis; pyruvate from D-glyceraldehyde 3-phosphate: step 4/5. In terms of biological role, catalyzes the reversible conversion of 2-phosphoglycerate (2-PG) into phosphoenolpyruvate (PEP). It is essential for the degradation of carbohydrates via glycolysis. The protein is Enolase of Shewanella loihica (strain ATCC BAA-1088 / PV-4).